A 290-amino-acid polypeptide reads, in one-letter code: Ribosomal RNA small subunit methyltransferase A (290 aa).

Positions 27, 29, 54, 75, 100, and 125 each coordinate S-adenosyl-L-methionine.

Belongs to the class I-like SAM-binding methyltransferase superfamily. rRNA adenine N(6)-methyltransferase family. RsmA subfamily.

Its subcellular location is the cytoplasm. It catalyses the reaction adenosine(1518)/adenosine(1519) in 16S rRNA + 4 S-adenosyl-L-methionine = N(6)-dimethyladenosine(1518)/N(6)-dimethyladenosine(1519) in 16S rRNA + 4 S-adenosyl-L-homocysteine + 4 H(+). In terms of biological role, specifically dimethylates two adjacent adenosines (A1518 and A1519) in the loop of a conserved hairpin near the 3'-end of 16S rRNA in the 30S particle. May play a critical role in biogenesis of 30S subunits. In Streptococcus pneumoniae (strain JJA), this protein is Ribosomal RNA small subunit methyltransferase A.